Consider the following 103-residue polypeptide: Protamine-3 (103 aa).

The disordered stretch occupies residues 1 to 103 (MGSRCAKLNT…QSPEPKRTPS (103 aa)). Over residues 10–21 (TGQSPGHSPGHS) the composition is skewed to low complexity. Over residues 50 to 66 (GEEEEEEEEEGEEEEKE) the composition is skewed to acidic residues. Residues 78–90 (EPERQEEGHKDNA) show a composition bias toward basic and acidic residues. S95 is modified (phosphoserine).

The protein belongs to the protamine P3 family.

It localises to the nucleus. The protein localises to the chromosome. In terms of biological role, protamines substitute for histones in the chromatin of sperm during the haploid phase of spermatogenesis. They compact sperm DNA into a highly condensed, stable and inactive complex. The protein is Protamine-3 (PRM3) of Homo sapiens (Human).